Consider the following 486-residue polypeptide: Cobyric acid synthase (486 aa).

The 189-residue stretch at alanine 250 to alanine 438 folds into the GATase cobBQ-type domain. Residue cysteine 331 is the Nucleophile of the active site. Histidine 430 is an active-site residue.

This sequence belongs to the CobB/CobQ family. CobQ subfamily.

The protein operates within cofactor biosynthesis; adenosylcobalamin biosynthesis. Catalyzes amidations at positions B, D, E, and G on adenosylcobyrinic A,C-diamide. NH(2) groups are provided by glutamine, and one molecule of ATP is hydrogenolyzed for each amidation. The chain is Cobyric acid synthase from Herminiimonas arsenicoxydans.